We begin with the raw amino-acid sequence, 130 residues long: Small ribosomal subunit protein uS11 (130 aa).

Belongs to the universal ribosomal protein uS11 family. As to quaternary structure, part of the 30S ribosomal subunit. Interacts with proteins S7 and S18. Binds to IF-3.

Located on the platform of the 30S subunit, it bridges several disparate RNA helices of the 16S rRNA. Forms part of the Shine-Dalgarno cleft in the 70S ribosome. This is Small ribosomal subunit protein uS11 from Prochlorococcus marinus (strain MIT 9301).